Here is a 62-residue protein sequence, read N- to C-terminus: Enterocin E-760 (62 aa).

Its subcellular location is the secreted. In terms of biological role, bacteriocin active against the Gram-negative bacteria S.enteritidis, S.choleraesuis, S.typhimurium, S.gallinarum, E.coli O157:H7, Y.enterocolitica, C.freundii, K.pneumoniae, S.dysentriae, P.aeruginosa, P.mirabilis, M.morganii, C.jejuni and 20 other Campylobacter isolates, and the Gram-positive bacteria S.aureus, S.epidermidis and L.monocytogenes. The polypeptide is Enterocin E-760 (Enterococcus sp).